Here is a 143-residue protein sequence, read N- to C-terminus: Large ribosomal subunit protein bL28c (143 aa).

A chloroplast-targeting transit peptide spans 1-66; sequence MTTMATQGAW…SFPGIQPIVA (66 aa).

This sequence belongs to the bacterial ribosomal protein bL28 family. Part of the 50S ribosomal subunit.

It localises to the plastid. The protein resides in the chloroplast. This Arabidopsis thaliana (Mouse-ear cress) protein is Large ribosomal subunit protein bL28c (RPL28).